The following is a 214-amino-acid chain: Auxin-binding protein ABP20 (214 aa).

The signal sequence occupies residues 1 to 23 (MPQATMIFPILFTFFLLLSSSNA). Cysteine 29 and cysteine 44 form a disulfide bridge. A Cupin type-1 domain is found at 58–204 (SGLGIAGNTS…TTFLDAAQIK (147 aa)). N-linked (GlcNAc...) asparagine glycosylation is present at asparagine 65. Residues histidine 106, histidine 108, glutamate 113, and histidine 152 each contribute to the Mn(2+) site.

This sequence belongs to the germin family. In terms of assembly, interacts with ABP19.

It is found in the secreted. Its subcellular location is the extracellular space. It localises to the apoplast. The protein localises to the cell wall. In terms of biological role, probable receptor for the plant growth-promoting hormone auxin. This Prunus persica (Peach) protein is Auxin-binding protein ABP20 (ABP20).